We begin with the raw amino-acid sequence, 467 residues long: Zinc finger protein mex-6 (467 aa).

Composition is skewed to low complexity over residues 1-22 and 179-195; these read MTAT…ATAQ and STTR…LPTS. Disordered stretches follow at residues 1-35 and 163-209; these read MTAT…QQHP and TNPQ…NRNS. At T190 the chain carries Phosphothreonine. Positions 196–207 are enriched in basic and acidic residues; that stretch reads REYETVQRDRNR. 2 C3H1-type zinc fingers span residues 273–302 and 317–347; these read NFKT…HGLK and KYKT…HPSD. The interval 425–451 is disordered; it reads INENDLPPHLRRIRRGNPPVTRSRPSF. The residue at position 457 (S457) is a Phosphoserine.

Interacts (probably when phosphorylated on Thr-190) with plk-1 (via POLO box domain) and plk-2 (via POLO box domain). In terms of processing, phosphorylation on Ser-457 by par-1 promotes localization of the protein to the anterior cytoplasm of the zygote.

The protein resides in the cytoplasm. Its function is as follows. Functions with mex-5 to affect embryonic viability, establish soma germline asymmetry in embryos and establish plk-1, pie-1, mex-1, and pos-1 asymmetry in embryos. Also affects formation of intestinal cells. The polypeptide is Zinc finger protein mex-6 (mex-6) (Caenorhabditis elegans).